Here is a 479-residue protein sequence, read N- to C-terminus: Shugoshin (479 aa).

The stretch at 36–76 (SLRIRSLESEVSNLLSENVSLREQIITLTQELERFEAARTL) forms a coiled coil. Disordered regions lie at residues 109–145 (SRAVRENGEPAPARQSRESGPKEVDDTDPEPNLGFLD), 220–247 (EHSLPPNLETRRKKKIGPATVNKDQADT), and 263–479 (AKRK…SMPP). Residues 123–132 (QSRESGPKEV) are compositionally biased toward basic and acidic residues. Residues 270-286 (EDDESLFESSPSEDDEF) show a composition bias toward acidic residues. Polar residues-rich tracts occupy residues 290 to 303 (RPAQSPKLFSQNEH) and 318 to 328 (QSPTLSSQNDH). Basic and acidic residues-rich tracts occupy residues 335–352 (PQSERSIAHVHGERRVLE) and 379–388 (GYNEKSEKPL). The segment covering 400-411 (KNASPKKSSTRT) has biased composition (polar residues).

It belongs to the shugoshin family.

Its subcellular location is the nucleus. It is found in the chromosome. The protein localises to the centromere. In terms of biological role, plays a central role in chromosome cohesion during cell division by preventing premature dissociation of cohesin complex from centromeres after prophase, when most of cohesin complex dissociates from chromosomes arms. The sequence is that of Shugoshin (sgo1) from Emericella nidulans (strain FGSC A4 / ATCC 38163 / CBS 112.46 / NRRL 194 / M139) (Aspergillus nidulans).